The following is a 284-amino-acid chain: MDAIKKKMQAMKLEKDNAMDRALLCEQQARDANLRAEKAEEEARSLQKKTQQIENDLDQTMEQLMQVNAKLDEKDKALQNAESEVAALNRRIQLLEEDLERSEERLATATAKLAEASQADDESERARKILESKGLADEERMDALENQLKEARFMAEEADKKYDEVARKLAMVEADLERAEERAESGESKIVELEEELRVVGNNLKSLEVSEEKANLREEEYKQQIKTLTTRLKEAEARAEFAERSVQKLQKEVDRLEDELVHEKEKYKFICDDLDMTFTELVGY.

A coiled-coil region spans residues 1-266; it reads MDAIKKKMQA…EDELVHEKEK (266 aa).

The protein belongs to the tropomyosin family. Homodimer.

Tropomyosin, in association with the troponin complex, plays a central role in the calcium dependent regulation of muscle contraction. This Periplaneta americana (American cockroach) protein is Tropomyosin Per a 7.0103.